The following is a 331-amino-acid chain: Dof zinc finger protein DOF1.1 (331 aa).

Residues 77–131 form a Dof-type zinc finger; it reads LKCPRCDSSNTKFCYYNNYNLTQPRHFCKGCRRYWTQGGALRNVPVGGGCRRNNK. Zn(2+) contacts are provided by Cys79, Cys82, Cys104, and Cys107. Disordered stretches follow at residues 121–166 and 291–331; these read PVGG…TNHQ and EEQP…NDLL. Over residues 135–160 the composition is skewed to low complexity; the sequence is NGNLKSSSSSSKQSSSVNAQSPSSGQ. The segment covering 305-316 has biased composition (polar residues); that stretch reads GLTSPGNQTNQY.

As to quaternary structure, interacts with OBF4. In terms of tissue distribution, expressed in the vasculature (mainly in the phloem and associated cell files) of cotyledons, leaves, roots, flower stalks and petals. The PEAR proteins (e.g. DOF2.4, DOF5.1, DOF3.2, DOF1.1, DOF5.6 and DOF5.3) form a short-range concentration gradient that peaks at protophloem sieve elements (PSE).

Its subcellular location is the nucleus. Functionally, transcription factor that binds specifically to a 5'-AA[AG]G-3' consensus core sequence. Enhances the DNA binding of OBF transcription factors to OCS elements. Involved in the regulation of root development. The PEAR proteins (e.g. DOF2.4, DOF5.1, DOF3.2, DOF1.1, DOF5.6 and DOF5.3) activate gene expression that promotes radial growth of protophloem sieve elements. Element of a regulatory network controlling indole glucosinolates (IGS) biosynthesis, probably by inducing the expression of accurate genes (e.g. CYP83B1). Promotes apical dominance. This chain is Dof zinc finger protein DOF1.1, found in Arabidopsis thaliana (Mouse-ear cress).